A 705-amino-acid chain; its full sequence is MKILKNCILLIIFGLLSTQLINADTDYCSLLENALMFYKMNRAGRLPDNDIPWRGNSALNDASPNSAKDANGDGNLSGGYFDAGDGVKFGLPMAYSMTMLGWSFIEYESNIAQCGLTSLYLDTIKYGTDWLIAAHTADNEFAGQVGDGNVDHSWWGPPEDMTMARPTYMLTTEAPGTEIAMEAASALAAASIAFKSSNPTYAATCLAHAKTLHNFGYTYRGVYSDSITNAQAFYNSWSGYKDDLVWGSIWLYKATQDSDYLTKAVADYASGGVGGMAQGNSHDWDNKAPGCCLLLSKLVPTTSTYKTDFEGWLNYWLPGGGVTYTPGGLAWIRQWGPARYAATAAFLGSLAGTEKGTDFTQKQVDYLIGNNPNQQSFVVGMGPNYPINPHHRAAHHSTTNDINNPVNNLYLLKGALVGGPGSNDEYTDDRTDYISNEVATDYNAGFVGALASLVNPSSTSVPTTTPTVTETPTETPTETPTETPTETPTETPTETPTETPTETPTETPTETPTETPTETPTETPTETPTETPTETPTETVTPTPTVTPTETPSSGESLSIYKSGLKNDFQDWSWGEHSLTDTTNVESGETNSISFTPKAYGAVFLGCFECIDTDTYNNIEFDINGGSSGAQLLRITVVKNSKSVGSKLITDLNGGTPIEANSWTKIKASFIDDFKVSGKVDGIWIQDIKGDTQSTVYISNIIATA.

The first 23 residues, 1–23, serve as a signal peptide directing secretion; the sequence is MKILKNCILLIIFGLLSTQLINA. A glycan (N-linked (GlcNAc...) asparagine) is linked at Asn-75. Asp-85 serves as the catalytic Nucleophile. Residues His-390, Asp-428, and Glu-437 contribute to the active site. The segment at 455–556 is disordered; sequence NPSSTSVPTT…TPTETPSSGE (102 aa). Residues 462–552 show a composition bias toward low complexity; that stretch reads PTTTPTVTET…TPTVTPTETP (91 aa). Residues 463–552 are pro/Thr repeats ('hinge') (Pro/Thr box); it reads TTTPTVTETP…TPTVTPTETP (90 aa).

It belongs to the glycosyl hydrolase 9 (cellulase E) family.

It carries out the reaction Endohydrolysis of (1-&gt;4)-beta-D-glucosidic linkages in cellulose, lichenin and cereal beta-D-glucans.. Its function is as follows. May digest the spore cell wall during germination, to release the enclosed amoeba. The polypeptide is Endoglucanase (celA) (Dictyostelium discoideum (Social amoeba)).